The following is a 734-amino-acid chain: Meiotic driver SPOK1 (734 aa).

Residues 4-41 (KDRIAQLLRELEEAKARVEEAKAREAQERCEKERLQLE) adopt a coiled-coil conformation. Disordered stretches follow at residues 180-222 (ELTQ…ICSN) and 414-499 (LSSA…MADP). A compositionally biased stretch (polar residues) spans 416–429 (SAPSSQNTDISEYT). The span at 457–468 (NEHDEHDEDHSE) shows a compositional bias: basic and acidic residues.

The protein localises to the cytoplasm. It is found in the nucleus. Functionally, promotes unequal transmission of alleles from the parental zygote to progeny spores by acting as poison/antidote system, leading to poisoning of progeny that do not inherit the allele. May possess DNA nuclease activity that leads to spore killing, and a kinase activity that confers resistance to the nuclease activity. Can suppress meiotic drive by the P.anserina SPOK2, SPOK3 and SPOK4 proteins. The polypeptide is Meiotic driver SPOK1 (Podospora comata).